The primary structure comprises 181 residues: UPF0301 protein MXAN_2022 (181 aa).

This sequence belongs to the UPF0301 (AlgH) family.

The protein is UPF0301 protein MXAN_2022 of Myxococcus xanthus (strain DK1622).